A 198-amino-acid polypeptide reads, in one-letter code: NAD(P)H dehydrogenase (quinone) (198 aa).

A Flavodoxin-like domain is found at 4–189; it reads VLVLYYSMYG…SIARYQGEYV (186 aa). Residues 10-15 and 78-80 contribute to the FMN site; these read SMYGHI and TRF. Tyr12 contributes to the NAD(+) binding site. Trp98 is a substrate binding site. Residues 113–118 and His133 each bind FMN; that span reads STGTGG.

The protein belongs to the WrbA family. FMN serves as cofactor.

It catalyses the reaction a quinone + NADH + H(+) = a quinol + NAD(+). It carries out the reaction a quinone + NADPH + H(+) = a quinol + NADP(+). The protein is NAD(P)H dehydrogenase (quinone) of Escherichia coli (strain SE11).